We begin with the raw amino-acid sequence, 82 residues long: Small ribosomal subunit protein bS16 (82 aa).

It belongs to the bacterial ribosomal protein bS16 family.

This is Small ribosomal subunit protein bS16 from Aeromonas salmonicida (strain A449).